Here is a 151-residue protein sequence, read N- to C-terminus: Ribosome maturation factor RimP (151 aa).

The protein belongs to the RimP family.

The protein resides in the cytoplasm. In terms of biological role, required for maturation of 30S ribosomal subunits. This is Ribosome maturation factor RimP from Photobacterium profundum (strain SS9).